Here is a 385-residue protein sequence, read N- to C-terminus: Putative UDP-N-acetylglucosamine 2-epimerase (385 aa).

This sequence belongs to the UDP-N-acetylglucosamine 2-epimerase family.

Its subcellular location is the cytoplasm. The catalysed reaction is UDP-N-acetyl-alpha-D-glucosamine = UDP-N-acetyl-alpha-D-mannosamine. This Clostridium acetobutylicum (strain ATCC 824 / DSM 792 / JCM 1419 / IAM 19013 / LMG 5710 / NBRC 13948 / NRRL B-527 / VKM B-1787 / 2291 / W) protein is Putative UDP-N-acetylglucosamine 2-epimerase.